Here is a 259-residue protein sequence, read N- to C-terminus: BTB/POZ domain-containing protein KCTD4 (259 aa).

Residues 1-22 (MEHKINRREKEKDYEGKHNSLE) are disordered. The region spanning 33-134 (TLMTLNVGGY…EVKSRWEKEQ (102 aa)) is the BTB domain.

The polypeptide is BTB/POZ domain-containing protein KCTD4 (KCTD4) (Bos taurus (Bovine)).